The primary structure comprises 392 residues: tRNA (guanine-N(7)-)-methyltransferase (392 aa).

Residues Glu123, Glu148, and Asp175 each contribute to the S-adenosyl-L-methionine site. The substrate site is built by Lys201 and Asp231.

It belongs to the class I-like SAM-binding methyltransferase superfamily. TrmB family.

It carries out the reaction guanosine(46) in tRNA + S-adenosyl-L-methionine = N(7)-methylguanosine(46) in tRNA + S-adenosyl-L-homocysteine. The protein operates within tRNA modification; N(7)-methylguanine-tRNA biosynthesis. Catalyzes the formation of N(7)-methylguanine at position 46 (m7G46) in tRNA. This chain is tRNA (guanine-N(7)-)-methyltransferase, found in Campylobacter jejuni subsp. jejuni serotype O:6 (strain 81116 / NCTC 11828).